Here is a 536-residue protein sequence, read N- to C-terminus: Proto-oncogene tyrosine-protein kinase Yrk (536 aa).

A lipid anchor (N-myristoyl glycine) is attached at Gly2. 2 S-palmitoyl cysteine lipidation sites follow: Cys3 and Cys6. Residues 10 to 36 (ISGKGQGGSGTGTPAHPPSQYDPDPTQ) are disordered. Residues 81–142 (GGVTLFIALY…PSNYVAPVDS (62 aa)) form the SH3 domain. Positions 148-245 (WYFGKIGRKD…GLCCRLAVPC (98 aa)) constitute an SH2 domain. The Protein kinase domain maps to 270-523 (LQLLQKLGNG…YLQSFLEDYF (254 aa)). ATP is bound by residues 276–284 (LGNGQFGEV) and Lys298. The active-site Proton acceptor is Asp389. Tyr419 bears the Phosphotyrosine; by autocatalysis mark. Tyr530 carries the phosphotyrosine modification.

This sequence belongs to the protein kinase superfamily. Tyr protein kinase family. SRC subfamily. Phosphorylated. As to expression, there are elevated levels of this protein in neural and hematopoietic tissues.

The catalysed reaction is L-tyrosyl-[protein] + ATP = O-phospho-L-tyrosyl-[protein] + ADP + H(+). In terms of biological role, may participate in signaling pathways. The sequence is that of Proto-oncogene tyrosine-protein kinase Yrk (YRK) from Gallus gallus (Chicken).